An 88-amino-acid chain; its full sequence is Small ribosomal subunit protein bS16 (88 aa).

This sequence belongs to the bacterial ribosomal protein bS16 family.

This Mycoplasma pneumoniae (strain ATCC 29342 / M129 / Subtype 1) (Mycoplasmoides pneumoniae) protein is Small ribosomal subunit protein bS16.